We begin with the raw amino-acid sequence, 426 residues long: Serine--tRNA ligase (426 aa).

235–237 contacts L-serine; the sequence is TAE. 266 to 268 lines the ATP pocket; that stretch reads RRE. An L-serine-binding site is contributed by Glu289. ATP is bound at residue 353-356; that stretch reads EISS. Residue Ser389 participates in L-serine binding.

It belongs to the class-II aminoacyl-tRNA synthetase family. Type-1 seryl-tRNA synthetase subfamily. Homodimer. The tRNA molecule binds across the dimer.

The protein localises to the cytoplasm. It catalyses the reaction tRNA(Ser) + L-serine + ATP = L-seryl-tRNA(Ser) + AMP + diphosphate + H(+). The catalysed reaction is tRNA(Sec) + L-serine + ATP = L-seryl-tRNA(Sec) + AMP + diphosphate + H(+). It participates in aminoacyl-tRNA biosynthesis; selenocysteinyl-tRNA(Sec) biosynthesis; L-seryl-tRNA(Sec) from L-serine and tRNA(Sec): step 1/1. Catalyzes the attachment of serine to tRNA(Ser). Is also able to aminoacylate tRNA(Sec) with serine, to form the misacylated tRNA L-seryl-tRNA(Sec), which will be further converted into selenocysteinyl-tRNA(Sec). The protein is Serine--tRNA ligase of Trichormus variabilis (strain ATCC 29413 / PCC 7937) (Anabaena variabilis).